Reading from the N-terminus, the 272-residue chain is 2-amino-3,7-dideoxy-D-threo-hept-6-ulosonate synthase (272 aa).

Catalysis depends on D33, which acts as the Proton acceptor. 1-deoxy-D-threo-hexo-2,5-diulose 6-phosphate contacts are provided by residues 33-37 and 153-155; these read DHGVS and YPR. Y153 (proton donor) is an active-site residue. The active-site Schiff-base intermediate with substrate is K184. 1-deoxy-D-threo-hexo-2,5-diulose 6-phosphate contacts are provided by residues 209–210 and 237–238; these read GG and GR.

Belongs to the DeoC/FbaB aldolase family. ADHS subfamily. Homodecamer.

The enzyme catalyses 1-deoxy-D-threo-hexo-2,5-diulose 6-phosphate + L-aspartate 4-semialdehyde = 2,3-dioxopropyl phosphate + 2-amino-2,3,7-trideoxy-D-lyxo-hept-6-ulosonate. Its function is as follows. Catalyzes a transaldol reaction between 6-deoxy-5-ketofructose 1-phosphate (DKFP) and L-aspartate semialdehyde (ASA) with an elimination of hydroxypyruvaldehyde phosphate to yield 2-amino-3,7-dideoxy-D-threo-hept-6-ulosonate (ADH). Plays a key role in an alternative pathway of the biosynthesis of 3-dehydroquinate (DHQ), which is involved in the canonical pathway for the biosynthesis of aromatic amino acids and which is also a precursor for the biosynthesis of p-aminobenzoic acid (PABA) in M.maripaludis. Does not possess fructose-bisphosphate (FBP) aldolase activity. This chain is 2-amino-3,7-dideoxy-D-threo-hept-6-ulosonate synthase, found in Methanococcus maripaludis (strain DSM 14266 / JCM 13030 / NBRC 101832 / S2 / LL).